The following is a 326-amino-acid chain: uncharacterized protein (326 aa).

Solcar repeat units follow at residues 15 to 106 (EFLV…VRRV), 114 to 215 (ETHA…ATDF), and 234 to 322 (LKTW…SKAL). Helical transmembrane passes span 16–36 (FLVK…SVVA), 83–103 (TATL…YEQV), 120–140 (FLSG…LELI), 191–211 (FSVT…AYDL), 240–260 (LLCG…FEVC), and 294–314 (FFVG…TSFF).

It belongs to the mitochondrial carrier (TC 2.A.29) family.

Its subcellular location is the mitochondrion inner membrane. This is an uncharacterized protein from Schizosaccharomyces pombe (strain 972 / ATCC 24843) (Fission yeast).